The sequence spans 137 residues: Interferon-induced transmembrane protein 3 (137 aa).

Residues 1 to 57 (MNHTSQAFVNAATGGQPPNYERIKEEYEVSELGAPHGSASVRTTVINMPREVSVPDH) lie on the Cytoplasmic side of the membrane. Phosphotyrosine is present on Tyr-20. Residue Lys-24 forms a Glycyl lysine isopeptide (Lys-Gly) (interchain with G-Cter in ubiquitin) linkage. Tyr-27 carries the phosphotyrosine modification. The helical intramembrane region spans 58 to 78 (VVWSLFNTLFMNFCCLGFIAY). Residues 60 to 93 (WSLFNTLFMNFCCLGFIAYAYSVKSRDRKMVGDM) are interaction with SPP1. Residues Cys-71 and Cys-72 are each lipidated (S-palmitoyl cysteine). Over 79–109 (AYSVKSRDRKMVGDMTGAQAYASTAKCLNIS) the chain is Cytoplasmic. Glycyl lysine isopeptide (Lys-Gly) (interchain with G-Cter in ubiquitin) cross-links involve residues Lys-83, Lys-88, and Lys-104. Residue Cys-105 is the site of S-palmitoyl cysteine attachment. Residues 108–133 (ISSLVLSILMVIITIVTVVIIALNAP) are interaction with VAPA. Residues 110-130 (SLVLSILMVIITIVTVVIIAL) traverse the membrane as a helical segment. The Extracellular portion of the chain corresponds to 131 to 137 (NAPRLQT).

This sequence belongs to the CD225/Dispanin family. In terms of assembly, interacts with ATP6V0B. Interacts with CD81. Interacts with SPP1; the interaction reduces OPN expression. Interacts with BRI3. Post-translationally, polyubiquitinated with both 'Lys-48' and 'Lys-63' linkages. Ubiquitination negatively regulates antiviral activity. Lys-24 is the most prevalent ubiquitination site. Phosphorylation at Tyr-20 is required for endosomal and lysosomal location.

It localises to the cell membrane. The protein localises to the late endosome membrane. The protein resides in the early endosome membrane. It is found in the lysosome membrane. Its subcellular location is the cytoplasm. It localises to the perinuclear region. In terms of biological role, IFN-induced antiviral protein which disrupts intracellular cholesterol homeostasis. Inhibits the entry of viruses to the host cell cytoplasm by preventing viral fusion with cholesterol depleted endosomes. May inactivate new enveloped viruses which buds out of the infected cell, by letting them go out with a cholesterol depleted membrane. Active against multiple viruses. Plays a critical role in the structural stability and function of vacuolar ATPase (v-ATPase). Establishes physical contact with the v-ATPase of endosomes which is critical for proper clathrin localization and is also required for the function of the v-ATPase to lower the pH in phagocytic endosomes thus establishing an antiviral state. The sequence is that of Interferon-induced transmembrane protein 3 from Rattus norvegicus (Rat).